The sequence spans 72 residues: Translation initiation factor IF-1 (72 aa).

Positions 1–72 constitute an S1-like domain; the sequence is MAKDDVIEVE…TRGRITYRYK (72 aa). Phosphotyrosine is present on Y60.

This sequence belongs to the IF-1 family. As to quaternary structure, component of the 30S ribosomal translation pre-initiation complex which assembles on the 30S ribosome in the order IF-2 and IF-3, IF-1 and N-formylmethionyl-tRNA(fMet); mRNA recruitment can occur at any time during PIC assembly.

It is found in the cytoplasm. In terms of biological role, one of the essential components for the initiation of protein synthesis. Stabilizes the binding of IF-2 and IF-3 on the 30S subunit to which N-formylmethionyl-tRNA(fMet) subsequently binds. Helps modulate mRNA selection, yielding the 30S pre-initiation complex (PIC). Upon addition of the 50S ribosomal subunit IF-1, IF-2 and IF-3 are released leaving the mature 70S translation initiation complex. In Bacillus licheniformis (strain ATCC 14580 / DSM 13 / JCM 2505 / CCUG 7422 / NBRC 12200 / NCIMB 9375 / NCTC 10341 / NRRL NRS-1264 / Gibson 46), this protein is Translation initiation factor IF-1.